A 277-amino-acid polypeptide reads, in one-letter code: Anamorsin homolog (277 aa).

The segment at 1–160 is N-terminal SAM-like domain; sequence MDTKRMLQNS…NIGSSFALKK (160 aa). Residues 161–188 are linker; the sequence is SIKSPVKVQNDDYSDLIDEDSLLTEEDL. Positions 199, 208, 211, and 213 each coordinate [2Fe-2S] cluster. Residues 199 to 213 form a fe-S binding site A region; it reads CEVGSTRKACKNCTC. Residues Cys238, Cys241, Cys249, and Cys252 each coordinate [4Fe-4S] cluster. 2 short sequence motifs (cx2C motif) span residues 238 to 241 and 249 to 252; these read CGSC and CGTC. Residues 238 to 252 form a fe-S binding site B region; sequence CGSCGLGDAFRCGTC.

Belongs to the anamorsin family. In terms of assembly, monomer. [2Fe-2S] cluster serves as cofactor. The cofactor is [4Fe-4S] cluster.

The protein localises to the cytoplasm. It is found in the mitochondrion intermembrane space. In terms of biological role, component of the cytosolic iron-sulfur (Fe-S) protein assembly (CIA) machinery. Required for the maturation of extramitochondrial Fe-S proteins. Part of an electron transfer chain functioning in an early step of cytosolic Fe-S biogenesis, facilitating the de novo assembly of a [4Fe-4S] cluster on the cytosolic Fe-S scaffold complex. Electrons are transferred from NADPH via a FAD- and FMN-containing diflavin oxidoreductase. Together with the diflavin oxidoreductase, also required for the assembly of the diferric tyrosyl radical cofactor of ribonucleotide reductase (RNR), probably by providing electrons for reduction during radical cofactor maturation in the catalytic small subunit. The protein is Anamorsin homolog of Populus trichocarpa (Western balsam poplar).